A 971-amino-acid chain; its full sequence is Zinc finger CCCH domain-containing protein 7A (971 aa).

3 TPR repeats span residues 43 to 76 (VRNLFNEGNDVYREHDWNNSISQYTEALNIADYA), 89 to 122 (EKLYINRIACYSNMGFHDKVLEDCNIVLSLNASN), and 124 to 156 (KALYRKSKALSDLGRYKKAYDAVAKCSLAVPQD). Thr-210 carries the phosphothreonine modification. 2 C3H1-type zinc fingers span residues 634–656 (LCRHEVRYGCLREDECFYAHSLV) and 769–797 (PLQFDLCNHIASGKKCQYVGNCSFAHSPE). Residues 857–881 (FHCWMCGKNCNSEKQWQGHISSEKH) form a C2H2-type zinc finger. A C3H1-type 3 zinc finger spans residues 906–928 (ICDRYMNGTCPEGNSCKFAHGNA). A coiled-coil region spans residues 924-952 (AHGNAELHEWEERRDALKMKLNKARKDHL).

It localises to the nucleus. In terms of biological role, may be a specific regulator of miRNA biogenesis. Binds to microRNAs MIR7-1, MIR16-2 and MIR29A hairpins recognizing the 3'-ATA(A/T)-5' motif in the apical loop. The polypeptide is Zinc finger CCCH domain-containing protein 7A (ZC3H7A) (Homo sapiens (Human)).